A 373-amino-acid chain; its full sequence is Muscleblind-like protein 2 (373 aa).

4 C3H1-type zinc fingers span residues Trp-13–Lys-41, Asn-47–Thr-73, Thr-176–Asp-204, and Asp-212–Ala-238.

The protein belongs to the muscleblind family. Interacts with ITGA3. Expressed in heart, brain, placenta, lung, liver, skeletal muscle, kidney and pancreas.

It localises to the nucleus. Its subcellular location is the cytoplasm. Its function is as follows. Mediates pre-mRNA alternative splicing regulation. Acts either as activator or repressor of splicing on specific pre-mRNA targets. Inhibits cardiac troponin-T (TNNT2) pre-mRNA exon inclusion but induces insulin receptor (IR) pre-mRNA exon inclusion in muscle. Antagonizes the alternative splicing activity pattern of CELF proteins. RNA-binding protein that binds to 5'ACACCC-3' core sequence, termed zipcode, within the 3'UTR of ITGA3. Binds to CUG triplet repeat expansion in myotonic dystrophy muscle cells by sequestering the target RNAs. Together with RNA binding proteins RBPMS and RBFOX2, activates vascular smooth muscle cells alternative splicing events. Regulates NCOR2 alternative splicing. Seems to regulate expression and localization of ITGA3 by transporting it from the nucleus to cytoplasm at adhesion plaques. May play a role in myotonic dystrophy pathophysiology (DM). The protein is Muscleblind-like protein 2 (MBNL2) of Homo sapiens (Human).